Here is a 763-residue protein sequence, read N- to C-terminus: Thiamine biosynthesis multifunctional protein ThiED (763 aa).

The thiamine-phosphate synthase stretch occupies residues 1 to 210; that stretch reads MTDFSLYLVT…ANPAAAATRL (210 aa). 4-amino-2-methyl-5-(diphosphooxymethyl)pyrimidine is bound by residues 37-41 and N69; that span reads QLRDK. Positions 70 and 88 each coordinate Mg(2+). S107 is a 4-amino-2-methyl-5-(diphosphooxymethyl)pyrimidine binding site. Residue 140–142 participates in 2-[(2R,5Z)-2-carboxy-4-methylthiazol-5(2H)-ylidene]ethyl phosphate binding; the sequence is TAT. K143 is a binding site for 4-amino-2-methyl-5-(diphosphooxymethyl)pyrimidine. 2-[(2R,5Z)-2-carboxy-4-methylthiazol-5(2H)-ylidene]ethyl phosphate-binding positions include G174 and 194–195; that span reads VS. Positions 245–500 are hydroxymethylpyrimidine/phosphomethylpyrimidine kinase; that stretch reads LSIAGTDPTG…GTGNGPVDHG (256 aa). Q282 provides a ligand contact to 4-amino-5-hydroxymethyl-2-methylpyrimidine. The interval 550–763 is thiaminase-2; that stretch reads FTRALWEASG…RHGWTMVGSS (214 aa).

In the N-terminal section; belongs to the thiamine-phosphate synthase family. It in the central section; belongs to the ThiD family. The protein in the C-terminal section; belongs to the thiaminase-2 family. Requires Mg(2+) as cofactor.

It catalyses the reaction 2-[(2R,5Z)-2-carboxy-4-methylthiazol-5(2H)-ylidene]ethyl phosphate + 4-amino-2-methyl-5-(diphosphooxymethyl)pyrimidine + 2 H(+) = thiamine phosphate + CO2 + diphosphate. The enzyme catalyses 2-(2-carboxy-4-methylthiazol-5-yl)ethyl phosphate + 4-amino-2-methyl-5-(diphosphooxymethyl)pyrimidine + 2 H(+) = thiamine phosphate + CO2 + diphosphate. It carries out the reaction 4-methyl-5-(2-phosphooxyethyl)-thiazole + 4-amino-2-methyl-5-(diphosphooxymethyl)pyrimidine + H(+) = thiamine phosphate + diphosphate. The catalysed reaction is 4-amino-5-hydroxymethyl-2-methylpyrimidine + ATP = 4-amino-2-methyl-5-(phosphooxymethyl)pyrimidine + ADP + H(+). It catalyses the reaction 4-amino-2-methyl-5-(phosphooxymethyl)pyrimidine + ATP = 4-amino-2-methyl-5-(diphosphooxymethyl)pyrimidine + ADP. The protein operates within cofactor biosynthesis; thiamine diphosphate biosynthesis; 4-amino-2-methyl-5-diphosphomethylpyrimidine from 5-amino-1-(5-phospho-D-ribosyl)imidazole: step 3/3. It participates in cofactor biosynthesis; thiamine diphosphate biosynthesis; thiamine phosphate from 4-amino-2-methyl-5-diphosphomethylpyrimidine and 4-methyl-5-(2-phosphoethyl)-thiazole: step 1/1. Condenses 4-methyl-5-(beta-hydroxyethyl)thiazole monophosphate (THZ-P) and 2-methyl-4-amino-5-hydroxymethyl pyrimidine pyrophosphate (HMP-PP) to form thiamine monophosphate (TMP). Its function is as follows. Catalyzes the phosphorylation of hydroxymethylpyrimidine phosphate (HMP-P) to HMP-PP, and of HMP to HMP-P. The chain is Thiamine biosynthesis multifunctional protein ThiED (theD) from Corynebacterium glutamicum (strain ATCC 13032 / DSM 20300 / JCM 1318 / BCRC 11384 / CCUG 27702 / LMG 3730 / NBRC 12168 / NCIMB 10025 / NRRL B-2784 / 534).